We begin with the raw amino-acid sequence, 517 residues long: Aspartyl/glutamyl-tRNA(Asn/Gln) amidotransferase subunit B (517 aa).

Belongs to the GatB/GatE family. GatB subfamily. In terms of assembly, heterotrimer of A, B and C subunits.

The catalysed reaction is L-glutamyl-tRNA(Gln) + L-glutamine + ATP + H2O = L-glutaminyl-tRNA(Gln) + L-glutamate + ADP + phosphate + H(+). It catalyses the reaction L-aspartyl-tRNA(Asn) + L-glutamine + ATP + H2O = L-asparaginyl-tRNA(Asn) + L-glutamate + ADP + phosphate + 2 H(+). Its function is as follows. Allows the formation of correctly charged Asn-tRNA(Asn) or Gln-tRNA(Gln) through the transamidation of misacylated Asp-tRNA(Asn) or Glu-tRNA(Gln) in organisms which lack either or both of asparaginyl-tRNA or glutaminyl-tRNA synthetases. The reaction takes place in the presence of glutamine and ATP through an activated phospho-Asp-tRNA(Asn) or phospho-Glu-tRNA(Gln). The protein is Aspartyl/glutamyl-tRNA(Asn/Gln) amidotransferase subunit B of Thermobifida fusca (strain YX).